Reading from the N-terminus, the 353-residue chain is Melanin-concentrating hormone receptor 1 (353 aa).

The disordered stretch occupies residues 1–26; the sequence is MDLQTSLLSTGPNASNISDGQDNLTL. The Extracellular portion of the chain corresponds to 1 to 45; sequence MDLQTSLLSTGPNASNISDGQDNLTLPGSPPRTGSVSYINIIMPS. N-linked (GlcNAc...) asparagine glycosylation is found at N13, N16, and N23. A helical membrane pass occupies residues 46 to 66; the sequence is VFGTICLLGIVGNSTVIFAVV. The Cytoplasmic segment spans residues 67 to 79; sequence KKSKLHWCSNVPD. The helical transmembrane segment at 80–100 threads the bilayer; sequence IFIINLSVVDLLFLLGMPFMI. The Extracellular segment spans residues 101 to 116; sequence HQLMGNGVWHFGETMC. A disulfide bridge links C116 with C194. The chain crosses the membrane as a helical span at residues 117-139; sequence TLITAMDANSQFTSTYILTAMTI. Residues 140–161 lie on the Cytoplasmic side of the membrane; it reads DRYLATVHPISSTKFRKPSMAT. A helical transmembrane segment spans residues 162–182; sequence LVICLLWALSFISITPVWLYA. At 183–204 the chain is on the extracellular side; sequence RLIPFPGGAVGCGIRLPNPDTD. Residues 205–225 form a helical membrane-spanning segment; it reads LYWFTLYQFFLAFALPFVVIT. At 226-256 the chain is on the cytoplasmic side; that stretch reads AAYVKILQRMTSSVAPASQRSIRLRTKRVTR. A helical membrane pass occupies residues 257 to 277; the sequence is TAIAICLVFFVCWAPYYVLQL. The Extracellular portion of the chain corresponds to 278–294; the sequence is TQLSISRPTLTFVYLYN. The helical transmembrane segment at 295–315 threads the bilayer; the sequence is AAISLGYANSCLNPFVYIVLC. Over 316–353 the chain is Cytoplasmic; sequence ETFRKRLVLSVKPAAQGQLRTVSNAQTADEERTESKGT.

It belongs to the G-protein coupled receptor 1 family. As to quaternary structure, interacts with NCDN. High level in the brain, moderate amounts in the eye and skeletal muscle, and small amounts in tongue and pituitary.

The protein localises to the cell membrane. In terms of biological role, receptor for melanin-concentrating hormone, coupled to G proteins that inhibit adenylyl cyclase. This Rattus norvegicus (Rat) protein is Melanin-concentrating hormone receptor 1.